A 341-amino-acid polypeptide reads, in one-letter code: Anthranilate phosphoribosyltransferase (341 aa).

5-phospho-alpha-D-ribose 1-diphosphate-binding positions include glycine 84, 87 to 88, threonine 92, 94 to 97, 112 to 120, and serine 124; these read GD, NIST, and KHGNRSVSS. Glycine 84 serves as a coordination point for anthranilate. Position 96 (serine 96) interacts with Mg(2+). An anthranilate-binding site is contributed by asparagine 115. Arginine 170 serves as a coordination point for anthranilate. Residues aspartate 229 and glutamate 230 each contribute to the Mg(2+) site.

Belongs to the anthranilate phosphoribosyltransferase family. Homodimer. The cofactor is Mg(2+).

It catalyses the reaction N-(5-phospho-beta-D-ribosyl)anthranilate + diphosphate = 5-phospho-alpha-D-ribose 1-diphosphate + anthranilate. Its pathway is amino-acid biosynthesis; L-tryptophan biosynthesis; L-tryptophan from chorismate: step 2/5. In terms of biological role, catalyzes the transfer of the phosphoribosyl group of 5-phosphorylribose-1-pyrophosphate (PRPP) to anthranilate to yield N-(5'-phosphoribosyl)-anthranilate (PRA). The sequence is that of Anthranilate phosphoribosyltransferase from Polynucleobacter necessarius subsp. necessarius (strain STIR1).